Here is a 912-residue protein sequence, read N- to C-terminus: Nitrate reductase [NADH] (912 aa).

A disordered region spans residues 1 to 99 (SVEPRQPFGR…PRDEGTADAW (99 aa)). Residues 13 to 23 (APATAPTARAP) are compositionally biased toward low complexity. Acidic residues predominate over residues 54-68 (AEEDEEDDDEDDEGH). A compositionally biased stretch (basic and acidic residues) spans 85 to 94 (PSTRDPRDEG). Residue Cys-186 coordinates Mo-molybdopterin. The 76-residue stretch at 535 to 610 (DKQFTMSEVR…LDTYRIGELI (76 aa)) folds into the Cytochrome b5 heme-binding domain. Heme-binding residues include His-570 and His-593. Residues 651 to 764 (REKVPCRLVD…KGPLGHVEYT (114 aa)) enclose the FAD-binding FR-type domain. FAD-binding positions include 703–706 (RAYT), 720–724 (LVKVY), Phe-725, Phe-732, 737–739 (LMT), Ser-788, and Thr-791.

It belongs to the nitrate reductase family. Homodimer. The cofactor is FAD. Requires heme as cofactor. Mo-molybdopterin is required as a cofactor.

It catalyses the reaction nitrite + NAD(+) + H2O = nitrate + NADH + H(+). Functionally, nitrate reductase is a key enzyme involved in the first step of nitrate assimilation in plants, fungi and bacteria. In Hordeum vulgare (Barley), this protein is Nitrate reductase [NADH].